Here is a 291-residue protein sequence, read N- to C-terminus: Ribosomal RNA small subunit methyltransferase A (291 aa).

6 residues coordinate S-adenosyl-L-methionine: histidine 21, leucine 23, glycine 48, glutamate 70, aspartate 95, and asparagine 115.

The protein belongs to the class I-like SAM-binding methyltransferase superfamily. rRNA adenine N(6)-methyltransferase family. RsmA subfamily.

The protein localises to the cytoplasm. The enzyme catalyses adenosine(1518)/adenosine(1519) in 16S rRNA + 4 S-adenosyl-L-methionine = N(6)-dimethyladenosine(1518)/N(6)-dimethyladenosine(1519) in 16S rRNA + 4 S-adenosyl-L-homocysteine + 4 H(+). In terms of biological role, specifically dimethylates two adjacent adenosines (A1518 and A1519) in the loop of a conserved hairpin near the 3'-end of 16S rRNA in the 30S particle. May play a critical role in biogenesis of 30S subunits. The chain is Ribosomal RNA small subunit methyltransferase A from Prochlorococcus marinus (strain NATL1A).